The chain runs to 93 residues: MANNKSAQKRIQVNERNRLQNRFYKSSVRTLIKVFLKNLEIYKTSKSPEGKEKLQKILSSVYSLIDKGTKKNVFHKNAAARKKAKLASSLKIS.

Belongs to the bacterial ribosomal protein bS20 family.

Its subcellular location is the plastid. The protein localises to the chloroplast. Binds directly to 16S ribosomal RNA. The chain is Small ribosomal subunit protein bS20c from Phaeodactylum tricornutum (strain CCAP 1055/1).